A 350-amino-acid chain; its full sequence is Bifunctional nitrilase/nitrile hydratase NIT4B (350 aa).

Positions 30-302 constitute a CN hydrolase domain; sequence VRATVVQAST…EALISADLDL (273 aa). Residue Glu70 is the Proton acceptor of the active site. Lys157 is an active-site residue. Cys191 (nucleophile) is an active-site residue.

It belongs to the carbon-nitrogen hydrolase superfamily. Nitrilase family. In terms of tissue distribution, highly expressed in leaves and cotyledons, lower expression in stems and roots.

It catalyses the reaction L-asparagine = 3-cyano-L-alanine + H2O. The catalysed reaction is 3-cyano-L-alanine + 2 H2O = L-aspartate + NH4(+). In terms of biological role, involved in the cyanide detoxification pathway. Has nitrilase and nitrile-hydratase activity in the ratio 3.3:1, producing both asparagine and aspartic acid from beta-cyano-L-alanine (Ala(CN)). Can also use 3-phenylpropionitrile as substrate, but not indole-3-acetonitrile. This chain is Bifunctional nitrilase/nitrile hydratase NIT4B (NIT4B), found in Lupinus angustifolius (Narrow-leaved blue lupine).